The primary structure comprises 141 residues: Large-conductance mechanosensitive channel (141 aa).

Transmembrane regions (helical) follow at residues valine 16–leucine 36 and glycine 83–isoleucine 103.

The protein belongs to the MscL family. Homopentamer.

It localises to the cell inner membrane. Its function is as follows. Channel that opens in response to stretch forces in the membrane lipid bilayer. May participate in the regulation of osmotic pressure changes within the cell. This Azoarcus sp. (strain BH72) protein is Large-conductance mechanosensitive channel.